A 370-amino-acid polypeptide reads, in one-letter code: 3-isopropylmalate dehydrogenase (370 aa).

77-90 (GPKWDSVPYEVRPE) lines the NAD(+) pocket. Residues Arg-97, Arg-107, Arg-135, and Asp-226 each coordinate substrate. Mg(2+)-binding residues include Asp-226, Asp-250, and Asp-254. An NAD(+)-binding site is contributed by 290–302 (GSAPDIAGKGIAN).

Belongs to the isocitrate and isopropylmalate dehydrogenases family. LeuB type 1 subfamily. In terms of assembly, homodimer. Mg(2+) is required as a cofactor. The cofactor is Mn(2+).

It is found in the cytoplasm. It catalyses the reaction (2R,3S)-3-isopropylmalate + NAD(+) = 4-methyl-2-oxopentanoate + CO2 + NADH. The protein operates within amino-acid biosynthesis; L-leucine biosynthesis; L-leucine from 3-methyl-2-oxobutanoate: step 3/4. Its function is as follows. Catalyzes the oxidation of 3-carboxy-2-hydroxy-4-methylpentanoate (3-isopropylmalate) to 3-carboxy-4-methyl-2-oxopentanoate. The product decarboxylates to 4-methyl-2 oxopentanoate. The protein is 3-isopropylmalate dehydrogenase of Brucella melitensis biotype 1 (strain ATCC 23456 / CCUG 17765 / NCTC 10094 / 16M).